Reading from the N-terminus, the 112-residue chain is Inner membrane assembly complex subunit 17 (112 aa).

A mitochondrion-targeting transit peptide spans 1–24 (MLRKLPINFAKWTVKKVPVQQKRF). Residues 25–44 (NSQQKEISPHIMFYKNYARP) are Mitochondrial matrix-facing. Residues 45–62 (LGKVTLFALATYYGLEIV) form a helical membrane-spanning segment. Over 63-112 (WWKLDASEQEAIKNSKLLICESSFSLLTFRRITEFRECEIKTRDLYDPEI) the chain is Mitochondrial intermembrane.

Belongs to the INA17 family. Component of the inner membrane assembly (INA) complex. Interacts with a subset of F(1)F(0)-ATP synthase subunits of the F(1)-domain and the peripheral stalk.

The protein resides in the mitochondrion inner membrane. Functionally, component of the INA complex (INAC) that promotes the biogenesis of mitochondrial F(1)F(0)-ATP synthase. INAC facilitates the assembly of the peripheral stalk and promotes the assembly of the catalytic F(1)-domain with the membrane-embedded F(0)-domain. This chain is Inner membrane assembly complex subunit 17, found in Schizosaccharomyces pombe (strain 972 / ATCC 24843) (Fission yeast).